A 360-amino-acid chain; its full sequence is Protein NDRG2 (360 aa).

Residues 324–360 form a disordered region; it reads SRTASLSSEGNRSRSRTLSQSSESGGGPPAPLAEVTC.

The protein belongs to the NDRG family.

The protein localises to the cytoplasm. Contributes to the regulation of the Wnt signaling pathway. Down-regulates CTNNB1-mediated transcriptional activation of target genes. May be involved in neuron differentiation. This is Protein NDRG2 (ndrg2) from Xenopus laevis (African clawed frog).